Consider the following 234-residue polypeptide: Flagellar L-ring protein (234 aa).

Residues 1-15 form the signal peptide; it reads MRYAVICMLLLAASG. The N-palmitoyl cysteine moiety is linked to residue Cys16. Cys16 carries S-diacylglycerol cysteine lipidation.

It belongs to the FlgH family. In terms of assembly, the basal body constitutes a major portion of the flagellar organelle and consists of four rings (L,P,S, and M) mounted on a central rod.

It localises to the cell outer membrane. Its subcellular location is the bacterial flagellum basal body. Its function is as follows. Assembles around the rod to form the L-ring and probably protects the motor/basal body from shearing forces during rotation. The sequence is that of Flagellar L-ring protein from Oleidesulfovibrio alaskensis (strain ATCC BAA-1058 / DSM 17464 / G20) (Desulfovibrio alaskensis).